A 377-amino-acid polypeptide reads, in one-letter code: Chaperone protein DnaJ (377 aa).

The region spanning 5 to 69 (EYYDRLGLSK…QKRAAYDQYG (65 aa)) is the J domain. The CR-type zinc finger occupies 133-215 (GAEKEIHYNR…CHGTGREKQS (83 aa)). Residues Cys146, Cys149, Cys163, Cys166, Cys189, Cys192, Cys203, and Cys206 each contribute to the Zn(2+) site. 4 CXXCXGXG motif repeats span residues 146 to 153 (CKTCSGSG), 163 to 170 (CGRCHGHG), 189 to 196 (CDVCHGTG), and 203 to 210 (CQTCHGTG).

The protein belongs to the DnaJ family. Homodimer. It depends on Zn(2+) as a cofactor.

The protein localises to the cytoplasm. Its function is as follows. Participates actively in the response to hyperosmotic and heat shock by preventing the aggregation of stress-denatured proteins and by disaggregating proteins, also in an autonomous, DnaK-independent fashion. Unfolded proteins bind initially to DnaJ; upon interaction with the DnaJ-bound protein, DnaK hydrolyzes its bound ATP, resulting in the formation of a stable complex. GrpE releases ADP from DnaK; ATP binding to DnaK triggers the release of the substrate protein, thus completing the reaction cycle. Several rounds of ATP-dependent interactions between DnaJ, DnaK and GrpE are required for fully efficient folding. Also involved, together with DnaK and GrpE, in the DNA replication of plasmids through activation of initiation proteins. This is Chaperone protein DnaJ from Streptococcus thermophilus (strain CNRZ 1066).